Reading from the N-terminus, the 355-residue chain is Uroporphyrinogen decarboxylase (355 aa).

Substrate-binding positions include 27-31 (RQAGR), D77, Y154, T209, and H327.

Belongs to the uroporphyrinogen decarboxylase family. In terms of assembly, homodimer.

It localises to the cytoplasm. The enzyme catalyses uroporphyrinogen III + 4 H(+) = coproporphyrinogen III + 4 CO2. Its pathway is porphyrin-containing compound metabolism; protoporphyrin-IX biosynthesis; coproporphyrinogen-III from 5-aminolevulinate: step 4/4. Catalyzes the decarboxylation of four acetate groups of uroporphyrinogen-III to yield coproporphyrinogen-III. The polypeptide is Uroporphyrinogen decarboxylase (Yersinia pseudotuberculosis serotype O:1b (strain IP 31758)).